The following is a 239-amino-acid chain: 1-(5-phosphoribosyl)-5-[(5-phosphoribosylamino)methylideneamino] imidazole-4-carboxamide isomerase (239 aa).

The active-site Proton acceptor is Asp-8. Residue Asp-130 is the Proton donor of the active site.

This sequence belongs to the HisA/HisF family.

It localises to the cytoplasm. It catalyses the reaction 1-(5-phospho-beta-D-ribosyl)-5-[(5-phospho-beta-D-ribosylamino)methylideneamino]imidazole-4-carboxamide = 5-[(5-phospho-1-deoxy-D-ribulos-1-ylimino)methylamino]-1-(5-phospho-beta-D-ribosyl)imidazole-4-carboxamide. Its pathway is amino-acid biosynthesis; L-histidine biosynthesis; L-histidine from 5-phospho-alpha-D-ribose 1-diphosphate: step 4/9. The chain is 1-(5-phosphoribosyl)-5-[(5-phosphoribosylamino)methylideneamino] imidazole-4-carboxamide isomerase from Lachnoclostridium phytofermentans (strain ATCC 700394 / DSM 18823 / ISDg) (Clostridium phytofermentans).